The primary structure comprises 338 residues: Selenocysteine methyltransferase (338 aa).

The 327-residue stretch at 1-327 folds into the Hcy-binding domain; sequence MSSPLITDFL…DTIRGIYKIL (327 aa). Zn(2+) contacts are provided by Cys245, Cys312, and Cys313.

In terms of assembly, monomer. It depends on Zn(2+) as a cofactor. Present in all tissues tested.

The enzyme catalyses S-methyl-L-methionine + L-selenocysteine = Se-methyl-L-selenocysteine + L-methionine + H(+). Functionally, catalyzes the methylation of selenocysteine with S-methylmethionine as donor. Does not methylate cysteine. The protein is Selenocysteine methyltransferase (SMTA) of Astragalus bisulcatus (Two-grooved milkvetch).